The following is a 227-amino-acid chain: MQLCVALDLEKKEDNLSLLQELKGLDLWAKVGLRSFIRDGATFLDEIRKIDGNFKIFLDLKLYDIPYTMANAALECAKLDIDMLTVHLSSAKSALTILMQRLNALKKRPLIMGVSALTSFSEEEFLMVYNAPLKTQAITLSAIGKESGIDGVVCSVFESLAIKEALGKGFLTLTPGIRLDKNDKEDQERVANAKEAKQNLSDFIVVGRPIYQAKEPREVVLELLKDC.

Residues Asp-8, Lys-30, 59–68, Thr-118, Arg-178, Gln-187, Gly-207, and Arg-208 each bind substrate; that span reads DLKLYDIPYT. Residue Lys-61 is the Proton donor of the active site.

This sequence belongs to the OMP decarboxylase family. Type 1 subfamily. Homodimer.

The enzyme catalyses orotidine 5'-phosphate + H(+) = UMP + CO2. The protein operates within pyrimidine metabolism; UMP biosynthesis via de novo pathway; UMP from orotate: step 2/2. Its function is as follows. Catalyzes the decarboxylation of orotidine 5'-monophosphate (OMP) to uridine 5'-monophosphate (UMP). The sequence is that of Orotidine 5'-phosphate decarboxylase from Helicobacter pylori (strain J99 / ATCC 700824) (Campylobacter pylori J99).